The following is a 365-amino-acid chain: UDP-N-acetylglucosamine--N-acetylmuramyl-(pentapeptide) pyrophosphoryl-undecaprenol N-acetylglucosamine transferase (365 aa).

UDP-N-acetyl-alpha-D-glucosamine contacts are provided by residues 17 to 19, Asn-129, Arg-167, Ser-194, Ile-250, 269 to 274, and Gln-295; these read TGG and ALTVSE.

It belongs to the glycosyltransferase 28 family. MurG subfamily.

Its subcellular location is the cell inner membrane. The catalysed reaction is di-trans,octa-cis-undecaprenyl diphospho-N-acetyl-alpha-D-muramoyl-L-alanyl-D-glutamyl-meso-2,6-diaminopimeloyl-D-alanyl-D-alanine + UDP-N-acetyl-alpha-D-glucosamine = di-trans,octa-cis-undecaprenyl diphospho-[N-acetyl-alpha-D-glucosaminyl-(1-&gt;4)]-N-acetyl-alpha-D-muramoyl-L-alanyl-D-glutamyl-meso-2,6-diaminopimeloyl-D-alanyl-D-alanine + UDP + H(+). It functions in the pathway cell wall biogenesis; peptidoglycan biosynthesis. Functionally, cell wall formation. Catalyzes the transfer of a GlcNAc subunit on undecaprenyl-pyrophosphoryl-MurNAc-pentapeptide (lipid intermediate I) to form undecaprenyl-pyrophosphoryl-MurNAc-(pentapeptide)GlcNAc (lipid intermediate II). The protein is UDP-N-acetylglucosamine--N-acetylmuramyl-(pentapeptide) pyrophosphoryl-undecaprenol N-acetylglucosamine transferase of Shewanella halifaxensis (strain HAW-EB4).